A 147-amino-acid polypeptide reads, in one-letter code: Bis(5'-nucleosyl)-tetraphosphatase [asymmetrical] (147 aa).

The 139-residue stretch at 1–139 (MALRACGLII…EMKAALQEGH (139 aa)) folds into the Nudix hydrolase domain. Ala2 is modified (N-acetylalanine). A Nudix box motif is present at residues 43 to 64 (GHVEPGEDDLETALRETQEEAG).

It belongs to the Nudix hydrolase family. It depends on a divalent metal cation as a cofactor.

The enzyme catalyses P(1),P(4)-bis(5'-guanosyl) tetraphosphate + H2O = GMP + GTP + 2 H(+). It carries out the reaction a 5'-end CoA-ribonucleoside in mRNA + H2O = a 5'-end phospho-adenosine-phospho-ribonucleoside in mRNA + (R)-4'-phosphopantetheine + 2 H(+). The catalysed reaction is a 5'-end FAD-phospho-ribonucleoside in mRNA + H2O = a 5'-end phospho-adenosine-phospho-ribonucleoside in mRNA + FMN + 2 H(+). In terms of biological role, catalyzes the asymmetric hydrolysis of diadenosine 5',5'''-P1,P4-tetraphosphate (Ap4A) to yield AMP and ATP. Exhibits decapping activity towards FAD-capped RNAs and dpCoA-capped RNAs in vitro. This Homo sapiens (Human) protein is Bis(5'-nucleosyl)-tetraphosphatase [asymmetrical] (NUDT2).